Consider the following 456-residue polypeptide: tRNA-2-methylthio-N(6)-dimethylallyladenosine synthase (456 aa).

The 119-residue stretch at 17–135 (KLYLIQSFGC…LPRMIHQVQE (119 aa)) folds into the MTTase N-terminal domain. Residues Cys26, Cys62, Cys96, Cys172, Cys176, and Cys179 each coordinate [4Fe-4S] cluster. One can recognise a Radical SAM core domain in the interval 158-387 (RKDKLKAWVT…IELQNLISLE (230 aa)). A TRAM domain is found at 390–453 (QREEGRVLEV…PNLLEGEVVP (64 aa)).

The protein belongs to the methylthiotransferase family. MiaB subfamily. In terms of assembly, monomer. The cofactor is [4Fe-4S] cluster.

Its subcellular location is the cytoplasm. It carries out the reaction N(6)-dimethylallyladenosine(37) in tRNA + (sulfur carrier)-SH + AH2 + 2 S-adenosyl-L-methionine = 2-methylsulfanyl-N(6)-dimethylallyladenosine(37) in tRNA + (sulfur carrier)-H + 5'-deoxyadenosine + L-methionine + A + S-adenosyl-L-homocysteine + 2 H(+). Functionally, catalyzes the methylthiolation of N6-(dimethylallyl)adenosine (i(6)A), leading to the formation of 2-methylthio-N6-(dimethylallyl)adenosine (ms(2)i(6)A) at position 37 in tRNAs that read codons beginning with uridine. The polypeptide is tRNA-2-methylthio-N(6)-dimethylallyladenosine synthase (Desulforamulus reducens (strain ATCC BAA-1160 / DSM 100696 / MI-1) (Desulfotomaculum reducens)).